The primary structure comprises 157 residues: Endoribonuclease YbeY (157 aa).

Zn(2+)-binding residues include His-118, His-122, and His-128.

The protein belongs to the endoribonuclease YbeY family. The cofactor is Zn(2+).

It localises to the cytoplasm. In terms of biological role, single strand-specific metallo-endoribonuclease involved in late-stage 70S ribosome quality control and in maturation of the 3' terminus of the 16S rRNA. The protein is Endoribonuclease YbeY of Bordetella bronchiseptica (strain ATCC BAA-588 / NCTC 13252 / RB50) (Alcaligenes bronchisepticus).